A 1167-amino-acid polypeptide reads, in one-letter code: Melanoma receptor tyrosine-protein kinase (1167 aa).

The N-terminal stretch at Met-1–Thr-25 is a signal peptide. Residues Asp-26–Ser-642 are Extracellular-facing. Residues Asn-114, Asn-144, and Asn-201 are each glycosylated (N-linked (GlcNAc...) asparagine). Disulfide bonds link Cys-195-Cys-204, Cys-199-Cys-212, Cys-220-Cys-228, Cys-224-Cys-236, Cys-237-Cys-245, Cys-241-Cys-253, Cys-256-Cys-265, Cys-269-Cys-296, Cys-300-Cys-311, Cys-315-Cys-330, and Cys-333-Cys-337. Residues Asn-356, Asn-365, Asn-398, Asn-417, and Asn-501 are each glycosylated (N-linked (GlcNAc...) asparagine). 9 disulfide bridges follow: Cys-504–Cys-513, Cys-508–Cys-521, Cys-524–Cys-533, Cys-537–Cys-553, Cys-556–Cys-569, Cys-560–Cys-577, Cys-593–Cys-615, Cys-618–Cys-626, and Cys-622–Cys-634. Asn-576 carries N-linked (GlcNAc...) asparagine glycosylation. Asn-621 carries N-linked (GlcNAc...) asparagine glycosylation. Residues Ser-643–Leu-665 form a helical membrane-spanning segment. Residues Leu-666–Arg-1167 lie on the Cytoplasmic side of the membrane. The Protein kinase domain maps to Phe-710 to Leu-977. ATP-binding positions include Leu-716–Val-724 and Lys-743. Asp-835 acts as the Proton acceptor in catalysis.

This sequence belongs to the protein kinase superfamily. Tyr protein kinase family. EGF receptor subfamily.

Its subcellular location is the membrane. The enzyme catalyses L-tyrosyl-[protein] + ATP = O-phospho-L-tyrosyl-[protein] + ADP + H(+). Probable receptor with tyrosine-protein kinase activity. The protein is Melanoma receptor tyrosine-protein kinase (xmrk) of Xiphophorus maculatus (Southern platyfish).